A 474-amino-acid chain; its full sequence is MGRKKIQITRIMDERNRQVTFTKRKFGLMKKAYELSVLCDCEIALIIFNSTNKLFQYASTDMDKVLLKYTEYNEPHESRTNSDIVETLRKKGLNGCDSPDPDADDSVGHSPESEDKYRKINEDIDLMISRQRLCAVPPPSFEMPVTIPVSSHNSLVYSNPVSTLGNPNLLPLAHPSLQRNSMSPGVTHRPPSAGNTGGLMGGDLTSGAGTSAGNGYGNPRNSPGLLVSPGNLNKNIQAKSPPPMNLGMNNRKPDLRVLIPPGSKNTMPSVSEDVDLLLNQRINNSQSAQSLATPVVSVATPTLPGQGMGGYPSAISTTYGTEYSLSSADLSSLSGFNTASALHLGSVTGWQQQHLHNMPPSALSQLGACTSTHLSQSSNLSLPSTQSLSIKSEPVSPPRDRTTTPSRYPQHTTRHEAGRSPVDSLSSCSSSYDGSDREDHRNEFHSPIGLTRPSPDERESPSVKRMRLSEGWAT.

Residues 3-57 (RKKIQITRIMDERNRQVTFTKRKFGLMKKAYELSVLCDCEIALIIFNSTNKLFQY) enclose the MADS-box domain. N6-acetyllysine is present on lysine 4. The mef2-type DNA-binding region spans 58 to 86 (ASTDMDKVLLKYTEYNEPHESRTNSDIVE). The residue at position 59 (serine 59) is a Phosphoserine; by CK2. A disordered region spans residues 91–118 (KGLNGCDSPDPDADDSVGHSPESEDKYR). Phosphoserine is present on residues serine 98 and serine 106. Glycine 108 is modified (phosphothreonine). Position 110 is a phosphoserine (serine 110). Lysine 116 and lysine 119 each carry N6-acetyllysine. 2 positions are modified to phosphoserine: serine 222 and serine 228. Lysine 234 and lysine 239 each carry N6-acetyllysine. The residue at position 240 (serine 240) is a Phosphoserine. Lysine 252 and lysine 264 each carry N6-acetyllysine. Residues 271 to 278 (SEDVDLLL) form a beta domain region. Threonine 293 and threonine 300 each carry phosphothreonine; by MAPK14. Residues 368–399 (ACTSTHLSQSSNLSLPSTQSLSIKSEPVSPPR) form a transcription repressor region. Polar residues predominate over residues 375–390 (SQSSNLSLPSTQSLSI). Positions 375-474 (SQSSNLSLPS…RMRLSEGWAT (100 aa)) are disordered. A Glycyl lysine isopeptide (Lys-Gly) (interchain with G-Cter in SUMO) cross-link involves residue lysine 391. Serine 396 bears the Phosphoserine; by CDK5 mark. Serine 420 carries the phosphoserine; by MAPK7 modification. Over residues 420–433 (SPVDSLSSCSSSYD) the composition is skewed to low complexity. Residues 434-444 (GSDREDHRNEF) show a composition bias toward basic and acidic residues. Serine 446 is subject to Phosphoserine.

Belongs to the MEF2 family. Forms a complex with class II HDACs in undifferentiating cells. On myogenic differentiation, HDACs are released into the cytoplasm allowing MEF2s to interact with other proteins for activation. Interacts with EP300 in differentiating cells; the interaction acetylates MEF2C leading to increased DNA binding and activation. Interacts with HDAC7 and CARM1. Interacts with HDAC4, HDAC7 AND HDAC9; the interaction with HDACs represses transcriptional activity. Interacts with LPIN1. Interacts with MYOCD. Interacts with AKAP13. Interacts with FOXK1; the interaction inhibits MEF2C transactivation activity. Interacts (via N-terminus) with HABP4; this interaction decreases DNA-binding activity of MEF2C in myocardial cells in response to mechanical stress. Interacts with JPH2; interaction specifically takes place with the Junctophilin-2 N-terminal fragment cleavage product of JPH2. Interacts (via MADS box) with SOX18. Interacts with PHF7; the interaction promotes MEF2C binding to its transcription targets. In terms of processing, phosphorylation on Ser-59 enhances DNA binding activity. Phosphorylation on Ser-396 is required for Lys-391 sumoylation and inhibits transcriptional activity. Post-translationally, acetylated by p300 on several sites in diffentiating myocytes. Acetylation on Lys-4 increases DNA binding and transactivation. Sumoylated on Lys-391 with SUMO2 but not by SUMO1 represses transcriptional activity. In terms of processing, proteolytically cleaved in cerebellar granule neurons, probably by caspase 7, following neurotoxicity. Preferentially cleaves the CDK5-mediated hyperphosphorylated form which leads to neuron apoptosis and transcriptional inactivation. As to expression, widely expressed though mainly restricted to skeletal and cardiac muscle, brain, neurons and lymphocytes. Beta domain-lacking isoforms are the most predominantly expressed in all tissues including skeletal and cardiac muscle and brain. Only brain expresses all isoforms. Expression occurs primarily in the internal granule cell layer of the olfactory bulb, cortex, thalamus, hippocampus and cerebellum. Low levels in the cerebellum and hindbrain. Expressed throughout the cortex, including the frontal and entorhinal cortex, dentate gyrus, and basolateral amygdala. Selectively expressed in B-cells but not in T-cells, and its expression increases as B-cells mature.

It is found in the nucleus. It localises to the cytoplasm. The protein resides in the sarcoplasm. Functionally, transcription activator which binds specifically to the MEF2 element present in the regulatory regions of many muscle-specific genes. Controls cardiac morphogenesis and myogenesis, and is also involved in vascular development. Enhances transcriptional activation mediated by SOX18. May also be involved in neurogenesis and in the development of cortical architecture. Isoforms that lack the repressor domain are more active than isoform 1. Plays an essential role in hippocampal-dependent learning and memory by suppressing the number of excitatory synapses and thus regulating basal and evoked synaptic transmission. Crucial for normal neuronal development, distribution, and electrical activity in the neocortex. Necessary for proper development of megakaryocytes and platelets and for bone marrow B-lymphopoiesis. Required for B-cell survival and proliferation in response to BCR stimulation, efficient IgG1 antibody responses to T-cell-dependent antigens and for normal induction of germinal center B-cells. This Mus musculus (Mouse) protein is Myocyte-specific enhancer factor 2C.